A 221-amino-acid polypeptide reads, in one-letter code: GTP-binding nuclear protein Ran-2 (221 aa).

One can recognise a Small GTPase Ran-type domain in the interval 10-174 (DYPSFKLVIV…LYLARKLAGD (165 aa)). 21-28 (DGGTGKTT) serves as a coordination point for GTP. Positions 40-48 (KKYEPTIGV) are switch-I. GTP contacts are provided by residues Gly71, 125–128 (NKVD), and 153–155 (SAK). The segment at 71–87 (GQEKFGGLRDGYYIHGQ) is switch-II. The span at 202–212 (ADLAAAAAQPL) shows a compositional bias: low complexity. Residues 202–221 (ADLAAAAAQPLPDDDDDAFE) form a disordered region.

Belongs to the small GTPase superfamily. Ran family. Found in a nuclear export complex with RanGTP, exportin and pre-miRNA. Interacts with RanBP1a and RanBP1b. Interacts with PHRIP1. Interacts with KPNB1. Binds to PHIP1.

The protein resides in the nucleus. It is found in the nucleus envelope. GTP-binding protein involved in nucleocytoplasmic transport. Required for the import of protein into the nucleus and also for RNA export. Involved in chromatin condensation and control of cell cycle. This chain is GTP-binding nuclear protein Ran-2, found in Arabidopsis thaliana (Mouse-ear cress).